A 118-amino-acid chain; its full sequence is Large ribosomal subunit protein uL18 (118 aa).

Belongs to the universal ribosomal protein uL18 family. Part of the 50S ribosomal subunit; part of the 5S rRNA/L5/L18/L25 subcomplex. Contacts the 5S and 23S rRNAs.

Its function is as follows. This is one of the proteins that bind and probably mediate the attachment of the 5S RNA into the large ribosomal subunit, where it forms part of the central protuberance. The chain is Large ribosomal subunit protein uL18 from Rhizorhabdus wittichii (strain DSM 6014 / CCUG 31198 / JCM 15750 / NBRC 105917 / EY 4224 / RW1) (Sphingomonas wittichii).